Here is a 230-residue protein sequence, read N- to C-terminus: Cytochrome c oxidase subunit 2 (230 aa).

At 1–14 the chain is on the mitochondrial intermembrane side; the sequence is MAHPTQLGFQDAAS. A helical transmembrane segment spans residues 15–45; the sequence is PVMEELLHFHDHALMIVFLISALVLYVIITT. The Mitochondrial matrix portion of the chain corresponds to 46–59; that stretch reads VSTKLTNMYILDSQ. A helical transmembrane segment spans residues 60-87; that stretch reads EIEIVWTVLPALILILIALPSLRILYLM. At 88 to 230 the chain is on the mitochondrial intermembrane side; sequence DEINDPHLTI…NWSTLMLKDA (143 aa). Positions 161, 196, 198, 200, 204, and 207 each coordinate Cu cation. Mg(2+) is bound at residue glutamate 198.

This sequence belongs to the cytochrome c oxidase subunit 2 family. As to quaternary structure, component of the cytochrome c oxidase (complex IV, CIV), a multisubunit enzyme composed of 14 subunits. The complex is composed of a catalytic core of 3 subunits MT-CO1, MT-CO2 and MT-CO3, encoded in the mitochondrial DNA, and 11 supernumerary subunits COX4I, COX5A, COX5B, COX6A, COX6B, COX6C, COX7A, COX7B, COX7C, COX8 and NDUFA4, which are encoded in the nuclear genome. The complex exists as a monomer or a dimer and forms supercomplexes (SCs) in the inner mitochondrial membrane with NADH-ubiquinone oxidoreductase (complex I, CI) and ubiquinol-cytochrome c oxidoreductase (cytochrome b-c1 complex, complex III, CIII), resulting in different assemblies (supercomplex SCI(1)III(2)IV(1) and megacomplex MCI(2)III(2)IV(2)). Found in a complex with TMEM177, COA6, COX18, COX20, SCO1 and SCO2. Interacts with TMEM177 in a COX20-dependent manner. Interacts with COX20. Interacts with COX16. The cofactor is Cu cation.

Its subcellular location is the mitochondrion inner membrane. The catalysed reaction is 4 Fe(II)-[cytochrome c] + O2 + 8 H(+)(in) = 4 Fe(III)-[cytochrome c] + 2 H2O + 4 H(+)(out). In terms of biological role, component of the cytochrome c oxidase, the last enzyme in the mitochondrial electron transport chain which drives oxidative phosphorylation. The respiratory chain contains 3 multisubunit complexes succinate dehydrogenase (complex II, CII), ubiquinol-cytochrome c oxidoreductase (cytochrome b-c1 complex, complex III, CIII) and cytochrome c oxidase (complex IV, CIV), that cooperate to transfer electrons derived from NADH and succinate to molecular oxygen, creating an electrochemical gradient over the inner membrane that drives transmembrane transport and the ATP synthase. Cytochrome c oxidase is the component of the respiratory chain that catalyzes the reduction of oxygen to water. Electrons originating from reduced cytochrome c in the intermembrane space (IMS) are transferred via the dinuclear copper A center (CU(A)) of subunit 2 and heme A of subunit 1 to the active site in subunit 1, a binuclear center (BNC) formed by heme A3 and copper B (CU(B)). The BNC reduces molecular oxygen to 2 water molecules using 4 electrons from cytochrome c in the IMS and 4 protons from the mitochondrial matrix. The protein is Cytochrome c oxidase subunit 2 (mt-co2) of Formosania lacustris (Oriental stream loach).